The following is a 175-amino-acid chain: MSQALTLARPYARAAFATARDEGAFAPWSDALAFSAHVAVDPRVAALLANPELGRDDAVALLAPVSHGETYSRFLAILAESHRLPLLPEISGMFDALRAEAEHVVKATVTSAAELSAGELDAIKVALRKRFNREVDVTTAVDASLIGGAVIDAGDVVIDGSLKGKLARLQTALAN.

This sequence belongs to the ATPase delta chain family. In terms of assembly, F-type ATPases have 2 components, F(1) - the catalytic core - and F(0) - the membrane proton channel. F(1) has five subunits: alpha(3), beta(3), gamma(1), delta(1), epsilon(1). F(0) has three main subunits: a(1), b(2) and c(10-14). The alpha and beta chains form an alternating ring which encloses part of the gamma chain. F(1) is attached to F(0) by a central stalk formed by the gamma and epsilon chains, while a peripheral stalk is formed by the delta and b chains.

The protein localises to the cell membrane. In terms of biological role, f(1)F(0) ATP synthase produces ATP from ADP in the presence of a proton or sodium gradient. F-type ATPases consist of two structural domains, F(1) containing the extramembraneous catalytic core and F(0) containing the membrane proton channel, linked together by a central stalk and a peripheral stalk. During catalysis, ATP synthesis in the catalytic domain of F(1) is coupled via a rotary mechanism of the central stalk subunits to proton translocation. Its function is as follows. This protein is part of the stalk that links CF(0) to CF(1). It either transmits conformational changes from CF(0) to CF(1) or is implicated in proton conduction. This is ATP synthase subunit delta from Stenotrophomonas maltophilia (strain K279a).